We begin with the raw amino-acid sequence, 370 residues long: Putative alanine racemase 2 (370 aa).

Residue lysine 38 is the Proton acceptor; specific for D-alanine of the active site. Lysine 38 is subject to N6-(pyridoxal phosphate)lysine. The Proton acceptor; specific for L-alanine role is filled by tyrosine 266.

This sequence belongs to the alanine racemase family. The cofactor is pyridoxal 5'-phosphate.

The enzyme catalyses L-alanine = D-alanine. The chain is Putative alanine racemase 2 (alr2) from Schizosaccharomyces pombe (strain 972 / ATCC 24843) (Fission yeast).